Reading from the N-terminus, the 126-residue chain is Protein ApaG (126 aa).

The ApaG domain maps to 2 to 126; the sequence is DVIQPCIKIQ…FRLAIPNVLN (125 aa).

The polypeptide is Protein ApaG (Vibrio campbellii (strain ATCC BAA-1116)).